Consider the following 349-residue polypeptide: uncharacterized protein (349 aa).

The chain crosses the membrane as a helical span at residues 16–36 (LVITIISTGLIFGMTLVLTGL). A disordered region spans residues 111–139 (FGAPEHGPGMPRVSEGRSPSKPDEVAASS). Over residues 124–134 (SEGRSPSKPDE) the composition is skewed to basic and acidic residues. The next 3 membrane-spanning stretches (helical) occupy residues 231 to 251 (ISIV…SVVY), 284 to 304 (VIAL…APLF), and 307 to 327 (IVAV…VIGL).

It belongs to the ABC-4 integral membrane protein family. The complex is composed of two ATP-binding proteins (MT0079), two transmembrane proteins (MT0078) and a solute-binding protein.

Its subcellular location is the cell membrane. In terms of biological role, probably part of an ABC transporter complex. Probably responsible for the translocation of the substrate across the membrane. This is an uncharacterized protein from Mycobacterium tuberculosis (strain CDC 1551 / Oshkosh).